The chain runs to 442 residues: Trigger factor (442 aa).

Positions 162 to 247 constitute a PPIase FKBP-type domain; the sequence is GDTVTIDYKG…IHEVKSKQLP (86 aa).

The protein belongs to the FKBP-type PPIase family. Tig subfamily.

The protein resides in the cytoplasm. The catalysed reaction is [protein]-peptidylproline (omega=180) = [protein]-peptidylproline (omega=0). In terms of biological role, involved in protein export. Acts as a chaperone by maintaining the newly synthesized protein in an open conformation. Functions as a peptidyl-prolyl cis-trans isomerase. This is Trigger factor from Lactobacillus acidophilus (strain ATCC 700396 / NCK56 / N2 / NCFM).